Reading from the N-terminus, the 207-residue chain is Ribosomal RNA small subunit methyltransferase G (207 aa).

S-adenosyl-L-methionine-binding positions include glycine 73, leucine 78, 124 to 125 (VE), and arginine 139.

The protein belongs to the methyltransferase superfamily. RNA methyltransferase RsmG family.

The protein localises to the cytoplasm. The catalysed reaction is guanosine(527) in 16S rRNA + S-adenosyl-L-methionine = N(7)-methylguanosine(527) in 16S rRNA + S-adenosyl-L-homocysteine. Its function is as follows. Specifically methylates the N7 position of guanine in position 527 of 16S rRNA. The chain is Ribosomal RNA small subunit methyltransferase G from Escherichia fergusonii (strain ATCC 35469 / DSM 13698 / CCUG 18766 / IAM 14443 / JCM 21226 / LMG 7866 / NBRC 102419 / NCTC 12128 / CDC 0568-73).